The sequence spans 477 residues: Trigger factor (477 aa).

The PPIase FKBP-type domain occupies 174-261 (GDIAVVSFKG…LKDLKEKELP (88 aa)). Positions 435-477 (VNEKTTKTSKATKTSKTTKATKTATKTTKTTKTTKTQNKKEKK) are disordered. The span at 442-470 (TSKATKTSKTTKATKTATKTTKTTKTTKT) shows a compositional bias: low complexity.

The protein belongs to the FKBP-type PPIase family. Tig subfamily.

It localises to the cytoplasm. The enzyme catalyses [protein]-peptidylproline (omega=180) = [protein]-peptidylproline (omega=0). Involved in protein export. Acts as a chaperone by maintaining the newly synthesized protein in an open conformation. Functions as a peptidyl-prolyl cis-trans isomerase. The protein is Trigger factor of Prochlorococcus marinus (strain MIT 9301).